Here is a 266-residue protein sequence, read N- to C-terminus: Heat-inducible transcription repressor HrcA (266 aa).

This sequence belongs to the HrcA family.

Functionally, negative regulator of class I heat shock genes (grpE-dnaK-dnaJ and groELS operons). Prevents heat-shock induction of these operons. This Helicobacter pylori (strain ATCC 700392 / 26695) (Campylobacter pylori) protein is Heat-inducible transcription repressor HrcA.